The primary structure comprises 263 residues: Glucosamine-6-phosphate deaminase (263 aa).

The Proton acceptor; for enolization step role is filled by Asp-72. The active-site For ring-opening step is Asp-141. The Proton acceptor; for ring-opening step role is filled by His-143. Glu-148 (for ring-opening step) is an active-site residue.

This sequence belongs to the glucosamine/galactosamine-6-phosphate isomerase family. NagB subfamily.

It catalyses the reaction alpha-D-glucosamine 6-phosphate + H2O = beta-D-fructose 6-phosphate + NH4(+). Its pathway is amino-sugar metabolism; N-acetylneuraminate degradation; D-fructose 6-phosphate from N-acetylneuraminate: step 5/5. Allosterically activated by N-acetylglucosamine 6-phosphate (GlcNAc6P). In terms of biological role, catalyzes the reversible isomerization-deamination of glucosamine 6-phosphate (GlcN6P) to form fructose 6-phosphate (Fru6P) and ammonium ion. This Porphyromonas gingivalis (strain ATCC 33277 / DSM 20709 / CIP 103683 / JCM 12257 / NCTC 11834 / 2561) protein is Glucosamine-6-phosphate deaminase.